Here is a 355-residue protein sequence, read N- to C-terminus: Peptide chain release factor 1 (355 aa).

Position 231 is an N5-methylglutamine (Gln231).

It belongs to the prokaryotic/mitochondrial release factor family. In terms of processing, methylated by PrmC. Methylation increases the termination efficiency of RF1.

Its subcellular location is the cytoplasm. Functionally, peptide chain release factor 1 directs the termination of translation in response to the peptide chain termination codons UAG and UAA. The polypeptide is Peptide chain release factor 1 (Nautilia profundicola (strain ATCC BAA-1463 / DSM 18972 / AmH)).